The sequence spans 409 residues: Ligand-gated cation channel ZACN (409 aa).

The signal sequence occupies residues Met1 to Thr18. Topologically, residues Gly19–Ala233 are extracellular. 2 N-linked (GlcNAc...) asparagine glycosylation sites follow: Asn55 and Asn99. A disulfide bond links Cys157 and Cys171. The chain crosses the membrane as a helical span at residues Ile234–Leu254. The Cytoplasmic segment spans residues Pro255 to Lys265. The chain crosses the membrane as a helical span at residues Val266 to Ser286. Over Ser287–Tyr296 the chain is Extracellular. A helical membrane pass occupies residues Phe297–Leu317. Over Gln318–His365 the chain is Cytoplasmic. The tract at residues Ala325 to Lys354 is disordered. Positions Glu336–Lys354 are enriched in basic and acidic residues. A helical membrane pass occupies residues Ile366 to Trp386. Residues Met387–Leu409 lie on the Extracellular side of the membrane.

This sequence belongs to the ligand-gated ion channel (TC 1.A.9) family. In terms of processing, glycosylated.

Its subcellular location is the cell membrane. The enzyme catalyses Na(+)(in) = Na(+)(out). It catalyses the reaction K(+)(in) = K(+)(out). Its function is as follows. Ligand-gated cation channel that allows the movement of sodium and potassium monoatomic cations across cell membranes when activated by zinc (Zn2+), copper (Cu2+), and changes in pH. Could also transport cesium. The sequence is that of Ligand-gated cation channel ZACN from Canis lupus familiaris (Dog).